A 231-amino-acid chain; its full sequence is ATP phosphoribosyltransferase (231 aa).

Belongs to the ATP phosphoribosyltransferase family. Short subfamily. In terms of assembly, heteromultimer composed of HisG and HisZ subunits.

Its subcellular location is the cytoplasm. The enzyme catalyses 1-(5-phospho-beta-D-ribosyl)-ATP + diphosphate = 5-phospho-alpha-D-ribose 1-diphosphate + ATP. Its pathway is amino-acid biosynthesis; L-histidine biosynthesis; L-histidine from 5-phospho-alpha-D-ribose 1-diphosphate: step 1/9. Catalyzes the condensation of ATP and 5-phosphoribose 1-diphosphate to form N'-(5'-phosphoribosyl)-ATP (PR-ATP). Has a crucial role in the pathway because the rate of histidine biosynthesis seems to be controlled primarily by regulation of HisG enzymatic activity. This is ATP phosphoribosyltransferase from Sinorhizobium medicae (strain WSM419) (Ensifer medicae).